Consider the following 88-residue polypeptide: Small ribosomal subunit protein bS18 (88 aa).

A compositionally biased stretch (low complexity) spans 1-11; the sequence is MTTANTTAKDN. Residues 1 to 21 are disordered; that stretch reads MTTANTTAKDNAATKKRGRKA.

This sequence belongs to the bacterial ribosomal protein bS18 family. As to quaternary structure, part of the 30S ribosomal subunit. Forms a tight heterodimer with protein bS6.

In terms of biological role, binds as a heterodimer with protein bS6 to the central domain of the 16S rRNA, where it helps stabilize the platform of the 30S subunit. The chain is Small ribosomal subunit protein bS18 from Thermoanaerobacter pseudethanolicus (strain ATCC 33223 / 39E) (Clostridium thermohydrosulfuricum).